The primary structure comprises 267 residues: Phosphate import ATP-binding protein PstB (267 aa).

One can recognise an ABC transporter domain in the interval 21–262 (VAARNLDFYY…PSKQQTEDYI (242 aa)). An ATP-binding site is contributed by 53-60 (GPSGCGKS).

The protein belongs to the ABC transporter superfamily. Phosphate importer (TC 3.A.1.7) family. The complex is composed of two ATP-binding proteins (PstB), two transmembrane proteins (PstC and PstA) and a solute-binding protein (PstS).

Its subcellular location is the cell inner membrane. The catalysed reaction is phosphate(out) + ATP + H2O = ADP + 2 phosphate(in) + H(+). Functionally, part of the ABC transporter complex PstSACB involved in phosphate import. Responsible for energy coupling to the transport system. The chain is Phosphate import ATP-binding protein PstB from Xanthomonas axonopodis pv. citri (strain 306).